A 70-amino-acid chain; its full sequence is Gas vesicle protein A (70 aa).

It belongs to the gas vesicle GvpA family. The gas vesicle shell is 2 nm thick and consists of a single layer of this protein. It forms helical ribs nearly perpendicular to the long axis of the vesicle.

It is found in the gas vesicle shell. In terms of biological role, gas vesicles are hollow, gas filled proteinaceous nanostructures found in some microorganisms. During planktonic growth they allow positioning of the organism at a favorable depth for light or nutrient acquisition. GvpA forms the protein shell. This Ancylobacter aquaticus protein is Gas vesicle protein A.